A 398-amino-acid chain; its full sequence is MSLQYGAEETPLAGSYGAADSFPKDFGYGVEEEEEEAAAGGGGGAGAGGGCGPGGADSSKPRILLMGLRRSGKSSIQKVVFHKMSPNETLFLESTNKIYKDDISNSSFVNFQIWDFPGQMDFFDPTFDYEMIFRGTGALIYVIDAQDDYMEALTRLHITVSKAYKVNPDMNFEVFIHKVDGLSDDHKIETQRDIHQRANDDLADAGLEKLHLSFYLTSIYDHSIFEAFSKVVQKLIPQLPTLENLLNIFISNSGIEKAFLFDVVSKIYIATDSSPVDMQSYELCCDMIDVVIDVSCIYGLKEDGSGSAYDKESMAIIKLNNTTVLYLKEVTKFLALVCILREESFERKGLIDYNFHCFRKAIHEVFEVGVTSHRSCSHQTSAPSLKALAHNGTPRNAI.

Residues 1–56 form a disordered region; sequence MSLQYGAEETPLAGSYGAADSFPKDFGYGVEEEEEEAAAGGGGGAGAGGGCGPGGA. Ser-2 is subject to N-acetylserine. Residues Ser-2 and Ser-15 each carry the phosphoserine modification. Gly residues predominate over residues 39–55; that stretch reads AGGGGGAGAGGGCGPGG. 6 residues coordinate GDP: Arg-70, Ser-71, Gly-72, Lys-73, Ser-74, and Ser-75. Lys-73 contacts GTP. GTP is bound by residues Thr-89 and Thr-95. The residue at position 95 (Thr-95) is a Phosphothreonine. His-177, Lys-178, Asp-180, and Ile-219 together coordinate GDP. Residue Asp-180 coordinates GTP.

This sequence belongs to the GTR/RAG GTP-binding protein family. Forms a heterodimer with RRAGA, in a sequence-independent manner, and RRAGB. Heterodimerization stabilizes proteins of the heterodimer. The GDP-bound form of RRAGC (in complex with the GTP-bound form of RRAGA or RRAGB), interacts with RPTOR, thereby promoting recruitment of mTORC1 to the lysosomes. Component of the lysosomal folliculin complex (LFC), composed of FLCN, FNIP1 (or FNIP2), RagA/RRAGA or RagB/RRAGB GDP-bound, RagC/RRAGC or RagD/RRAGD GTP-bound, and Ragulator. Interacts with NOL8. Interacts with SH3BP4; the interaction with this negative regulator is most probably direct, preferentially occurs with the inactive GDP-bound form of RRAGB, is negatively regulated by amino acids and prevents interaction with RPTOR. The Rag heterodimer interacts with SLC38A9; the probable amino acid sensor. Interacts with SESN1, SESN2 and SESN3. Interacts with PIP4P1. The GDP-bound form interacts with TFEB. The GDP-bound form interacts with TFE3. Expressed most abundantly in kidney. Moderately expressed in brain, ovary, and testis, and detected at lower levels in heart, liver, and muscle. Not detected in lung, spleen, and small intestine. Widely expressed in tumor cells, with expression being specifically up-regulated in highly metastatic cells.

It localises to the cytoplasm. It is found in the nucleus. The protein localises to the lysosome membrane. It carries out the reaction GTP + H2O = GDP + phosphate + H(+). With respect to regulation, the activation of RagC/RRAGC is mediated by a GTPase activating protein (GAP). In high-amino acid conditions, activated by GTPase activating protein FLCN that stimulates RRAGC GTPase activity to turn it into its active GDP-bound form. In response to amino acid depletion, the GATOR1 complex inactivates RagC/RRAGC by securing the GTP-bound inactive form. In terms of biological role, guanine nucleotide-binding protein that plays a crucial role in the cellular response to amino acid availability through regulation of the mTORC1 signaling cascade. Forms heterodimeric Rag complexes with RagA/RRAGA or RagB/RRAGB and cycles between an inactive GTP-bound and an active GDP-bound form: RagC/RRAGC is in its active form when GDP-bound RagC/RRAGC forms a complex with GTP-bound RagA/RRAGA (or RagB/RRAGB) and in an inactive form when GTP-bound RagC/RRAGC heterodimerizes with GDP-bound RagA/RRAGA (or RagB/RRAGB). In its GDP-bound active form, promotes the recruitment of mTORC1 to the lysosomes and its subsequent activation by the GTPase RHEB. This is a crucial step in the activation of the MTOR signaling cascade by amino acids. Also plays a central role in the non-canonical mTORC1 complex, which acts independently of RHEB and specifically mediates phosphorylation of MiT/TFE factors TFEB and TFE3: GDP-bound RagC/RRAGC mediates recruitment of MiT/TFE factors TFEB and TFE3. This is Ras-related GTP-binding protein C from Mus musculus (Mouse).